The sequence spans 1328 residues: ABC transporter C family member 7 (1328 aa).

Residues 104–389 (HKTSIIVQIF…LPQAIQRLLS (286 aa)) enclose the ABC transmembrane type-1 1 domain. Helical transmembrane passes span 112–132 (IFSA…ILYV), 140–160 (SFLV…FLSI), 224–244 (LILL…CWTI), 245–265 (GYSG…STFL), 287–307 (ISEM…LFFI), and 333–353 (MVVQ…YTLI). The region spanning 457–678 (IELVNNDSIE…FDFESIMKTK (222 aa)) is the ABC transporter 1 domain. 490–497 (GVVGSGKS) serves as a coordination point for ATP. Residues 684-695 (LNNSNNNNNNNN) show a composition bias toward low complexity. A disordered region spans residues 684-708 (LNNSNNNNNNNNNKEEEEDVENLEK). The next 5 helical transmembrane spans lie at 762 to 782 (FIFF…FLLF), 802 to 822 (DSFY…FLGI), 894 to 914 (VLMM…LALF), 988 to 1008 (IGIK…FFSL), and 1014 to 1034 (GLSV…NWCI). The ABC transmembrane type-1 2 domain maps to 765–1046 (FFTMIMMYII…YIEFSMKMSS (282 aa)). Positions 1083–1316 (IQFKNVEIKY…INNQNSKFKK (234 aa)) constitute an ABC transporter 2 domain. 1117–1124 (GKSGSGKS) contributes to the ATP binding site.

Belongs to the ABC transporter superfamily. ABCC family. Conjugate transporter (TC 3.A.1.208) subfamily.

The protein localises to the membrane. The polypeptide is ABC transporter C family member 7 (abcC7) (Dictyostelium discoideum (Social amoeba)).